The primary structure comprises 430 residues: Alpha-(1-&gt;3)-arabinofuranosyltransferase (430 aa).

10 helical membrane-spanning segments follow: residues alanine 26–isoleucine 46, tryptophan 114–phenylalanine 134, tyrosine 136–valine 156, leucine 160–leucine 180, alanine 194–leucine 214, phenylalanine 218–leucine 238, tryptophan 276–leucine 296, phenylalanine 307–glycine 327, tryptophan 352–tryptophan 372, and tyrosine 381–phenylalanine 401.

It belongs to the glycosyltransferase 87 family.

It localises to the cell membrane. The catalysed reaction is Adds an alpha-D-arabinofuranosyl group from trans,octacis-decaprenylphospho-beta-D-arabinofuranose at the 3-O-position of an alpha-(1-&gt;5)-arabinofuranan chain attached to a beta-(1-&gt;5)-galactofuranan chain.. Its pathway is cell wall biogenesis; cell wall polysaccharide biosynthesis. Its function is as follows. Involved in the biosynthesis of the arabinogalactan (AG) region of the mycolylarabinogalactan-peptidoglycan (mAGP) complex, an essential component of the mycobacterial cell wall. Catalyzes the addition of an arabinofuranosyl (Araf) residue from the sugar donor beta-D-arabinofuranosyl-1-monophosphoryldecaprenol (DPA) on the C-3 of an alpha-(1-&gt;5)-linked Araf from the arabinan backbone of AG. The polypeptide is Alpha-(1-&gt;3)-arabinofuranosyltransferase (aftC) (Mycolicibacterium smegmatis (strain ATCC 700084 / mc(2)155) (Mycobacterium smegmatis)).